The following is a 107-amino-acid chain: uncharacterized protein (107 aa).

Transmembrane regions (helical) follow at residues phenylalanine 9–glutamate 28, serine 33–isoleucine 50, leucine 55–valine 72, and tyrosine 77–glycine 99.

It is found in the cell membrane. This is an uncharacterized protein from Archaeoglobus fulgidus (strain ATCC 49558 / DSM 4304 / JCM 9628 / NBRC 100126 / VC-16).